We begin with the raw amino-acid sequence, 342 residues long: Holliday junction branch migration complex subunit RuvB (342 aa).

The tract at residues 1–22 (MTLKPVREVSPGSQEGEERLEQ) is disordered. Residues 1-185 (MTLKPVREVS…FPIQERLGYY (185 aa)) form a large ATPase domain (RuvB-L) region. Residues Leu24, Arg25, Gly66, Lys69, Thr70, Ser71, 132 to 134 (EDY), Arg175, Tyr185, and Arg222 contribute to the ATP site. Residue Thr70 coordinates Mg(2+). The segment at 186-256 (EPTELREIAV…IVETTLERLE (71 aa)) is small ATPAse domain (RuvB-S). The interval 259–342 (GRGLDAMDRR…RPQGKQGSLI (84 aa)) is head domain (RuvB-H). 3 residues coordinate DNA: Arg295, Arg314, and Arg319.

The protein belongs to the RuvB family. Homohexamer. Forms an RuvA(8)-RuvB(12)-Holliday junction (HJ) complex. HJ DNA is sandwiched between 2 RuvA tetramers; dsDNA enters through RuvA and exits via RuvB. An RuvB hexamer assembles on each DNA strand where it exits the tetramer. Each RuvB hexamer is contacted by two RuvA subunits (via domain III) on 2 adjacent RuvB subunits; this complex drives branch migration. In the full resolvosome a probable DNA-RuvA(4)-RuvB(12)-RuvC(2) complex forms which resolves the HJ.

It is found in the cytoplasm. The catalysed reaction is ATP + H2O = ADP + phosphate + H(+). Its function is as follows. The RuvA-RuvB-RuvC complex processes Holliday junction (HJ) DNA during genetic recombination and DNA repair, while the RuvA-RuvB complex plays an important role in the rescue of blocked DNA replication forks via replication fork reversal (RFR). RuvA specifically binds to HJ cruciform DNA, conferring on it an open structure. The RuvB hexamer acts as an ATP-dependent pump, pulling dsDNA into and through the RuvAB complex. RuvB forms 2 homohexamers on either side of HJ DNA bound by 1 or 2 RuvA tetramers; 4 subunits per hexamer contact DNA at a time. Coordinated motions by a converter formed by DNA-disengaged RuvB subunits stimulates ATP hydrolysis and nucleotide exchange. Immobilization of the converter enables RuvB to convert the ATP-contained energy into a lever motion, pulling 2 nucleotides of DNA out of the RuvA tetramer per ATP hydrolyzed, thus driving DNA branch migration. The RuvB motors rotate together with the DNA substrate, which together with the progressing nucleotide cycle form the mechanistic basis for DNA recombination by continuous HJ branch migration. Branch migration allows RuvC to scan DNA until it finds its consensus sequence, where it cleaves and resolves cruciform DNA. This chain is Holliday junction branch migration complex subunit RuvB, found in Anaeromyxobacter sp. (strain Fw109-5).